The primary structure comprises 96 residues: Integration host factor subunit beta (96 aa).

Positions 59-78 (RVGRNPKTGETVSLPGKYVP) are disordered.

This sequence belongs to the bacterial histone-like protein family. Heterodimer of an alpha and a beta chain.

Functionally, this protein is one of the two subunits of integration host factor, a specific DNA-binding protein that functions in genetic recombination as well as in transcriptional and translational control. This Thioalkalivibrio sulfidiphilus (strain HL-EbGR7) protein is Integration host factor subunit beta.